The following is a 268-amino-acid chain: MMQRCLRLQKPLALRRGLRLAQANSQAVATEAPEAEPLDAFERQYLKERIEISPFQRLFLGAGSSIAALLNPRRHDMIACLGETTGEDALWTILDTMQASEEGQRIMADKPRIHTSTIDFKYLETLPPDTFGAAYVKFLKDNQVTPDSRMAVRFLEDPKLAYLMTRYRECHDLIHTVLDMPTNMLGEVAVKWVEALNTGLPMCYGGAVFGAVRLRPKQRRAYLKHYLPWALENGKRTKPLMPVYWEKRWEQNIHELRSELGITVLNKA.

Zn(2+)-binding residues include His-171, Asp-172, His-175, and Glu-187.

It belongs to the COQ4 family. Component of a multi-subunit COQ enzyme complex. The cofactor is Zn(2+).

Its subcellular location is the mitochondrion inner membrane. The enzyme catalyses a 4-hydroxy-3-methoxy-5-(all-trans-polyprenyl)benzoate + H(+) = a 2-methoxy-6-(all-trans-polyprenyl)phenol + CO2. It functions in the pathway cofactor biosynthesis; ubiquinone biosynthesis. Lyase that catalyzes the C1-decarboxylation of 4-hydroxy-3-methoxy-5-(all-trans-polyprenyl)benzoic acid into 2-methoxy-6-(all-trans-polyprenyl)phenol during ubiquinone biosynthesis. The sequence is that of Ubiquinone biosynthesis protein COQ4 homolog, mitochondrial from Drosophila melanogaster (Fruit fly).